Consider the following 416-residue polypeptide: UDP-N-acetylglucosamine 1-carboxyvinyltransferase (416 aa).

22–23 is a binding site for phosphoenolpyruvate; sequence KN. Arginine 91 lines the UDP-N-acetyl-alpha-D-glucosamine pocket. Cysteine 115 (proton donor) is an active-site residue. Cysteine 115 is modified (2-(S-cysteinyl)pyruvic acid O-phosphothioketal). Positions 304 and 326 each coordinate UDP-N-acetyl-alpha-D-glucosamine.

Belongs to the EPSP synthase family. MurA subfamily.

Its subcellular location is the cytoplasm. It carries out the reaction phosphoenolpyruvate + UDP-N-acetyl-alpha-D-glucosamine = UDP-N-acetyl-3-O-(1-carboxyvinyl)-alpha-D-glucosamine + phosphate. Its pathway is cell wall biogenesis; peptidoglycan biosynthesis. Its function is as follows. Cell wall formation. Adds enolpyruvyl to UDP-N-acetylglucosamine. In Thermodesulfovibrio yellowstonii (strain ATCC 51303 / DSM 11347 / YP87), this protein is UDP-N-acetylglucosamine 1-carboxyvinyltransferase.